Reading from the N-terminus, the 326-residue chain is Protein TMED8 (326 aa).

Residues Met-1–Glu-80 form a disordered region. The GOLD domain occupies Pro-160 to Tyr-324. Lys-170 bears the N6-acetyllysine mark. The tract at residues Asp-238–Ser-268 is disordered. Positions Ser-239 to Glu-255 are enriched in acidic residues.

The protein is Protein TMED8 (TMED8) of Pongo abelii (Sumatran orangutan).